The sequence spans 160 residues: S-ribosylhomocysteine lyase (160 aa).

Fe cation is bound by residues histidine 57, histidine 61, and cysteine 127.

Belongs to the LuxS family. In terms of assembly, homodimer. It depends on Fe cation as a cofactor.

The catalysed reaction is S-(5-deoxy-D-ribos-5-yl)-L-homocysteine = (S)-4,5-dihydroxypentane-2,3-dione + L-homocysteine. In terms of biological role, involved in the synthesis of autoinducer 2 (AI-2) which is secreted by bacteria and is used to communicate both the cell density and the metabolic potential of the environment. The regulation of gene expression in response to changes in cell density is called quorum sensing. Catalyzes the transformation of S-ribosylhomocysteine (RHC) to homocysteine (HC) and 4,5-dihydroxy-2,3-pentadione (DPD). The sequence is that of S-ribosylhomocysteine lyase from Streptococcus sanguinis (strain SK36).